The following is a 245-amino-acid chain: MAVGLCVQVLCSLGGWLSLYTSFCCLNKHRSCEWSCRLVTFTHGVLSIGLSAYIGFIDGPWPFTHPGSPNTPLQVHVLCLTLGYFIFDLGWCIYFQSEGPLMLAHHTLSILGIIMALALGESGTEVNAVLFGSEITNPLLQMRWFLRETGHYHSFTGDVVDFLFVALFTGVRIGVGAHLLFCEMVSPTPKWFVKVGGVAMYAVSWCFMVSIWRFAWKKSIKKYHAWRSRRNEERQLRHNGHLKTH.

Transmembrane regions (helical) follow at residues 1–21 (MAVG…SLYT), 38–58 (LVTF…GFID), 75–95 (VHVL…CIYF), 99–119 (GPLM…ALAL), 162–182 (FLFV…LLFC), and 191–211 (WFVK…MVSI). Residues 29 to 204 (HRSCEWSCRL…VGGVAMYAVS (176 aa)) form the TLC domain.

The protein belongs to the TLCD5 family.

The protein resides in the membrane. The sequence is that of TLC domain-containing protein 5 (Tlcd5) from Mus musculus (Mouse).